The primary structure comprises 496 residues: Steroid 21-hydroxylase (496 aa).

Position 109 (S109) interacts with heme b. R232 lines the 17alpha-hydroxyprogesterone pocket. Position 232 (R232) interacts with progesterone. Heme b contacts are provided by H364, R425, and C427.

It belongs to the cytochrome P450 family. It depends on heme b as a cofactor.

It is found in the endoplasmic reticulum membrane. The protein resides in the microsome membrane. The catalysed reaction is progesterone + reduced [NADPH--hemoprotein reductase] + O2 = 21-hydroxyprogesterone + oxidized [NADPH--hemoprotein reductase] + H2O + H(+). It catalyses the reaction 17alpha-hydroxyprogesterone + reduced [NADPH--hemoprotein reductase] + O2 = 11-deoxycortisol + oxidized [NADPH--hemoprotein reductase] + H2O + H(+). Its function is as follows. A cytochrome P450 monooxygenase that plays a major role in adrenal steroidogenesis. Catalyzes the hydroxylation at C-21 of progesterone and 17alpha-hydroxyprogesterone to respectively form 11-deoxycorticosterone and 11-deoxycortisol, intermediate metabolites in the biosynthetic pathway of mineralocorticoids and glucocorticoids. Mechanistically, uses molecular oxygen inserting one oxygen atom into a substrate, and reducing the second into a water molecule, with two electrons provided by NADPH via cytochrome P450 reductase (CPR; NADPH-ferrihemoprotein reductase). This chain is Steroid 21-hydroxylase (CYP21), found in Bos taurus (Bovine).